A 132-amino-acid polypeptide reads, in one-letter code: Small ribosomal subunit protein uS8 (132 aa).

Belongs to the universal ribosomal protein uS8 family. Part of the 30S ribosomal subunit. Contacts proteins S5 and S12.

Functionally, one of the primary rRNA binding proteins, it binds directly to 16S rRNA central domain where it helps coordinate assembly of the platform of the 30S subunit. This chain is Small ribosomal subunit protein uS8, found in Mycobacterium bovis (strain ATCC BAA-935 / AF2122/97).